A 440-amino-acid polypeptide reads, in one-letter code: Trigger factor (440 aa).

Residues 163-248 (GDGVTVDFEG…VKKIESAHLP (86 aa)) enclose the PPIase FKBP-type domain.

This sequence belongs to the FKBP-type PPIase family. Tig subfamily.

The protein resides in the cytoplasm. The catalysed reaction is [protein]-peptidylproline (omega=180) = [protein]-peptidylproline (omega=0). Involved in protein export. Acts as a chaperone by maintaining the newly synthesized protein in an open conformation. Functions as a peptidyl-prolyl cis-trans isomerase. The sequence is that of Trigger factor from Verminephrobacter eiseniae (strain EF01-2).